The primary structure comprises 89 residues: MPLSKEQKQEVMEKYKLHEHDTGSPEVQIAILTEKIKQLNEHLKTHQQDHASRRGLLKMVGKRRGLLNYLKSNSADRYLELIKKLGLRK.

Residues 1–22 (MPLSKEQKQEVMEKYKLHEHDT) form a disordered region.

It belongs to the universal ribosomal protein uS15 family. As to quaternary structure, part of the 30S ribosomal subunit. Forms a bridge to the 50S subunit in the 70S ribosome, contacting the 23S rRNA.

Functionally, one of the primary rRNA binding proteins, it binds directly to 16S rRNA where it helps nucleate assembly of the platform of the 30S subunit by binding and bridging several RNA helices of the 16S rRNA. In terms of biological role, forms an intersubunit bridge (bridge B4) with the 23S rRNA of the 50S subunit in the ribosome. The protein is Small ribosomal subunit protein uS15 of Natranaerobius thermophilus (strain ATCC BAA-1301 / DSM 18059 / JW/NM-WN-LF).